Reading from the N-terminus, the 397-residue chain is Acetate kinase (397 aa).

Position 7 (Asn-7) interacts with Mg(2+). Position 14 (Lys-14) interacts with ATP. Arg-90 contributes to the substrate binding site. The active-site Proton donor/acceptor is the Asp-147. ATP-binding positions include 207–211 (HLGNG), 282–284 (DFR), and 330–334 (GLGEN). Glu-383 contributes to the Mg(2+) binding site.

It belongs to the acetokinase family. As to quaternary structure, homodimer. Mg(2+) is required as a cofactor. Mn(2+) serves as cofactor.

Its subcellular location is the cytoplasm. It catalyses the reaction acetate + ATP = acetyl phosphate + ADP. Its pathway is metabolic intermediate biosynthesis; acetyl-CoA biosynthesis; acetyl-CoA from acetate: step 1/2. Functionally, catalyzes the formation of acetyl phosphate from acetate and ATP. Can also catalyze the reverse reaction. This Clostridium botulinum (strain Kyoto / Type A2) protein is Acetate kinase.